Here is a 677-residue protein sequence, read N- to C-terminus: UvrABC system protein B (677 aa).

In terms of domain architecture, Helicase ATP-binding spans 25–412; that stretch reads DGVNSGREYQ…SGAIIEQVIR (388 aa). An ATP-binding site is contributed by 38 to 45; the sequence is GATGTGKT. The short motif at 91-114 is the Beta-hairpin element; it reads YYDYYQPEAYVPVSDTYIAKTSSI. The Helicase C-terminal domain occupies 429–591; the sequence is QVEDLLDEIR…IVPMPAGKKA (163 aa). The UVR domain occupies 639–674; the sequence is PQLIDELETKMKKSAKDLDFENAAKLRDKIHQLRKK.

This sequence belongs to the UvrB family. As to quaternary structure, forms a heterotetramer with UvrA during the search for lesions. Interacts with UvrC in an incision complex.

The protein resides in the cytoplasm. Functionally, the UvrABC repair system catalyzes the recognition and processing of DNA lesions. A damage recognition complex composed of 2 UvrA and 2 UvrB subunits scans DNA for abnormalities. Upon binding of the UvrA(2)B(2) complex to a putative damaged site, the DNA wraps around one UvrB monomer. DNA wrap is dependent on ATP binding by UvrB and probably causes local melting of the DNA helix, facilitating insertion of UvrB beta-hairpin between the DNA strands. Then UvrB probes one DNA strand for the presence of a lesion. If a lesion is found the UvrA subunits dissociate and the UvrB-DNA preincision complex is formed. This complex is subsequently bound by UvrC and the second UvrB is released. If no lesion is found, the DNA wraps around the other UvrB subunit that will check the other stand for damage. The sequence is that of UvrABC system protein B from Prochlorococcus marinus (strain SARG / CCMP1375 / SS120).